The chain runs to 201 residues: Recombination protein RecR (201 aa).

Residues 60 to 75 (CSCCGNVDTIDPCTVC) form a C4-type zinc finger. Residues 83 to 178 (AVIIVVEDVA…RITRLAHGVP (96 aa)) enclose the Toprim domain.

The protein belongs to the RecR family.

May play a role in DNA repair. It seems to be involved in an RecBC-independent recombinational process of DNA repair. It may act with RecF and RecO. This is Recombination protein RecR from Sinorhizobium medicae (strain WSM419) (Ensifer medicae).